A 117-amino-acid polypeptide reads, in one-letter code: Ribosome-binding factor A (117 aa).

It belongs to the RbfA family. As to quaternary structure, monomer. Binds 30S ribosomal subunits, but not 50S ribosomal subunits or 70S ribosomes.

The protein resides in the cytoplasm. Its function is as follows. One of several proteins that assist in the late maturation steps of the functional core of the 30S ribosomal subunit. Associates with free 30S ribosomal subunits (but not with 30S subunits that are part of 70S ribosomes or polysomes). Required for efficient processing of 16S rRNA. May interact with the 5'-terminal helix region of 16S rRNA. The protein is Ribosome-binding factor A of Petrotoga mobilis (strain DSM 10674 / SJ95).